The following is a 343-amino-acid chain: Membrane progestin receptor delta (343 aa).

Residues Met-1 to Thr-49 lie on the Cytoplasmic side of the membrane. Residues Val-50–Gly-70 form a helical membrane-spanning segment. The Extracellular portion of the chain corresponds to Ser-71–Tyr-79. The chain crosses the membrane as a helical span at residues His-80 to Ala-100. Over His-101–His-112 the chain is Cytoplasmic. The helical transmembrane segment at Ile-113 to Tyr-133 threads the bilayer. Residues Ala-134–Arg-146 lie on the Extracellular side of the membrane. The helical transmembrane segment at Leu-147–Cys-167 threads the bilayer. At Tyr-168–Asp-216 the chain is on the cytoplasmic side. The helical transmembrane segment at Ala-217–Ala-237 threads the bilayer. The Extracellular segment spans residues Ala-238–Gln-257. Residues Leu-258–Met-278 form a helical membrane-spanning segment. At Gly-279–Thr-291 the chain is on the cytoplasmic side. A helical transmembrane segment spans residues Leu-292–Ile-312. The Extracellular segment spans residues Ala-313–Gln-343.

Belongs to the ADIPOR family. In terms of assembly, homodimer.

It is found in the cell membrane. Its function is as follows. Plasma membrane progesterone (P4) receptor coupled to G proteins. Seems to act through a G(s) mediated pathway. Involved in neurosteroid inhibition of apoptosis. May be involved in regulating rapid P4 signaling in the nervous system. Also binds dehydroepiandrosterone (DHEA), pregnanolone, pregnenolone and allopregnanolone. This Mus musculus (Mouse) protein is Membrane progestin receptor delta.